Reading from the N-terminus, the 244-residue chain is MKNIKLTVQYDGSKFYGWQKLNDLPSVQLEIEKAVTKMVHQPVKINGAGRTDKGVHAKGQVCNFIVDTDISANQFLMGVNHFTSDSIVIVKSEEMDLDFHARFSAKSKTYKYILCNKYYMEPWFNDYKGHRKYYLDFDLLLKCRDMLIGKHDFTSFVNDLEEDINPVRTIDEITIEKIDDDIVFTFKAESFLRNMVRILVGSMVDVARGRKSIDWLKNALENKDRQSAGITIEPSGLYLMDIEY.

The active-site Nucleophile is Asp52. Position 110 (Tyr110) interacts with substrate.

Belongs to the tRNA pseudouridine synthase TruA family. In terms of assembly, homodimer.

It carries out the reaction uridine(38/39/40) in tRNA = pseudouridine(38/39/40) in tRNA. In terms of biological role, formation of pseudouridine at positions 38, 39 and 40 in the anticodon stem and loop of transfer RNAs. The polypeptide is tRNA pseudouridine synthase A (Finegoldia magna (strain ATCC 29328 / DSM 20472 / WAL 2508) (Peptostreptococcus magnus)).